The primary structure comprises 147 residues: Lysozyme C, intestinal isozyme (147 aa).

The first 18 residues, 1–18 (MKAVLILGLLLLSVTVQG), serve as a signal peptide directing secretion. The C-type lysozyme domain occupies 19–147 (KKFEKCELAR…VSSYIRGCKL (129 aa)). 4 disulfides stabilise this stretch: Cys24-Cys145, Cys48-Cys133, Cys83-Cys99, and Cys95-Cys113. Residues Glu53 and Asp71 contribute to the active site.

This sequence belongs to the glycosyl hydrolase 22 family.

It catalyses the reaction Hydrolysis of (1-&gt;4)-beta-linkages between N-acetylmuramic acid and N-acetyl-D-glucosamine residues in a peptidoglycan and between N-acetyl-D-glucosamine residues in chitodextrins.. In terms of biological role, lysozymes have primarily a bacteriolytic function; those in tissues and body fluids are associated with the monocyte-macrophage system and enhance the activity of immunoagents. In Bos taurus (Bovine), this protein is Lysozyme C, intestinal isozyme.